Consider the following 317-residue polypeptide: Taste receptor type 2 member 14 (317 aa).

At 1 to 7 the chain is on the extracellular side; the sequence is MGDVIKS. The helical transmembrane segment at 8–28 threads the bilayer; the sequence is IFTFVLIVEFIIGNLGNSFIA. Residues 29–55 are Cytoplasmic-facing; the sequence is LVNCIDWVKGRKISSVDQILTALAISR. Residues 56-76 form a helical membrane-spanning segment; the sequence is ISLVWLIFGSWCVSVFLPALF. Over 77–87 the chain is Extracellular; sequence ATEKMFRMLTN. Cholesterol-binding residues include threonine 86 and tryptophan 89. A helical membrane pass occupies residues 88–108; it reads IWTVINHFSVWLATGLGTFYF. Residues 109 to 129 are Cytoplasmic-facing; that stretch reads LKIANFSNSIFLYLKWRVKKV. The chain crosses the membrane as a helical span at residues 130–150; that stretch reads VLVLLLVTSVFLFLNIALINI. The Extracellular segment spans residues 151-184; it reads HINASINGYRRNKTCSSDSSNFTRFSSLIVLTST. N-linked (GlcNAc...) asparagine glycosylation is found at asparagine 153, asparagine 162, and asparagine 171. Valine 180 serves as a coordination point for cholesterol. Residues 185–205 form a helical membrane-spanning segment; that stretch reads VFIFIPFTLSLAMFLLLIFSL. Over 206 to 232 the chain is Cytoplasmic; the sequence is WKHRKKMQHXVKRSGDASTKAHRGVKS. The helical transmembrane segment at 233–253 threads the bilayer; it reads VITFFLLYAIFCLSFFISVWT. The Extracellular segment spans residues 254 to 261; it reads SERLEENL. A helical transmembrane segment spans residues 262 to 282; the sequence is IILSQVMGMAYPSCHSCVLIL. Residues serine 265 and methionine 268 each contribute to the cholesterol site. Topologically, residues 283-317 are cytoplasmic; sequence GNKKLRQASLSVLLWLRYMFKDGEPSGHKEFRESS.

This sequence belongs to the G-protein coupled receptor T2R family. Core component of the TAS2R14-GNAI1 complex, consisting of TAS2R14, GNAI1, GNB1 and GNG2; within the complex interacts with GNAI1. Core component of the TAS2R14-GNAT3 complex, consisting of TAS2R14, GNAT3, GNB1 and GNG2; within the complex interacts with GNAT3. Core component of the TAS2R14-GNAS2 complex, consisting of TAS2R14, GNAS2, GNB1 and GNG2; within the complex interacts with GNAS2.

It is found in the membrane. The catalysed reaction is Ca(2+)(in) = Ca(2+)(out). The enzyme catalyses 3',5'-cyclic AMP(in) = 3',5'-cyclic AMP(out). With respect to regulation, basal activity is enhanced by binding to bitter tastants, such as flufenamic acid and aristolochic acid. Regulated by cholesterol in a concentration-dependent manner. Gustducin-linked G-protein coupled receptor that plays a role in the perception of bitterness. The activity of this receptor stimulates GNAT3, activating the gustducin G-protein pathway. Likely plays a role in sensing the chemical composition of the gastrointestinal content and other extra-oral tissues via the inhibitory G-protein pathways. The chain is Taste receptor type 2 member 14 (TAS2R14) from Gorilla gorilla gorilla (Western lowland gorilla).